The primary structure comprises 92 residues: Small ribosomal subunit protein uS19 (92 aa).

Belongs to the universal ribosomal protein uS19 family.

Protein S19 forms a complex with S13 that binds strongly to the 16S ribosomal RNA. This chain is Small ribosomal subunit protein uS19, found in Borrelia duttonii (strain Ly).